The chain runs to 275 residues: Glucosamine-6-phosphate deaminase 2 (275 aa).

Asp-72 functions as the Proton acceptor; for enolization step in the catalytic mechanism. Residues 102-131 are a coiled coil; sequence NNAHILDGNASDLQAECEDFERKIKEAGGI. The active-site For ring-opening step is the Asp-141. Residue His-143 is the Proton acceptor; for ring-opening step of the active site. The active-site For ring-opening step is the Glu-148.

Belongs to the glucosamine/galactosamine-6-phosphate isomerase family. In terms of assembly, homohexamer.

It localises to the cytoplasm. It catalyses the reaction alpha-D-glucosamine 6-phosphate + H2O = beta-D-fructose 6-phosphate + NH4(+). In terms of biological role, catalyzes the reversible conversion of alpha-D-glucosamine 6-phosphate (GlcN-6P) into beta-D-fructose 6-phosphate (Fru-6P) and ammonium ion, a regulatory reaction step in de novo uridine diphosphate-N-acetyl-alpha-D-glucosamine (UDP-GlcNAc) biosynthesis via hexosamine pathway. This Xenopus laevis (African clawed frog) protein is Glucosamine-6-phosphate deaminase 2.